The primary structure comprises 41 residues: MKILNSLKTAKSRHPDCQIVRRKGKLYVICKTNPRFKARQR.

The protein belongs to the bacterial ribosomal protein bL36 family.

In Haemophilus ducreyi (strain 35000HP / ATCC 700724), this protein is Large ribosomal subunit protein bL36B.